Reading from the N-terminus, the 453-residue chain is tRNA-2-methylthio-N(6)-dimethylallyladenosine synthase (453 aa).

The MTTase N-terminal domain maps to 17-135 (GTFFIETWGC…FPEYLNRAKQ (119 aa)). Positions 26, 62, 96, 172, 176, and 179 each coordinate [4Fe-4S] cluster. Positions 158 to 388 (RKSSTKAFVT…VEVVNKSCEK (231 aa)) constitute a Radical SAM core domain. In terms of domain architecture, TRAM spans 391–453 (KKYQDRIVKV…LSFSLEGEEV (63 aa)).

It belongs to the methylthiotransferase family. MiaB subfamily. In terms of assembly, monomer. [4Fe-4S] cluster is required as a cofactor.

The protein resides in the cytoplasm. It catalyses the reaction N(6)-dimethylallyladenosine(37) in tRNA + (sulfur carrier)-SH + AH2 + 2 S-adenosyl-L-methionine = 2-methylsulfanyl-N(6)-dimethylallyladenosine(37) in tRNA + (sulfur carrier)-H + 5'-deoxyadenosine + L-methionine + A + S-adenosyl-L-homocysteine + 2 H(+). Its function is as follows. Catalyzes the methylthiolation of N6-(dimethylallyl)adenosine (i(6)A), leading to the formation of 2-methylthio-N6-(dimethylallyl)adenosine (ms(2)i(6)A) at position 37 in tRNAs that read codons beginning with uridine. This Clostridium tetani (strain Massachusetts / E88) protein is tRNA-2-methylthio-N(6)-dimethylallyladenosine synthase.